The following is a 548-amino-acid chain: Folylpolyglutamate synthase (548 aa).

130–133 (GKGS) is an ATP binding site. Mg(2+) is bound by residues serine 157, glutamate 234, and histidine 262. ATP contacts are provided by arginine 382 and aspartate 396.

This sequence belongs to the folylpolyglutamate synthase family. A monovalent cation is required as a cofactor.

The protein localises to the mitochondrion inner membrane. The protein resides in the mitochondrion matrix. It localises to the cytoplasm. It carries out the reaction (6S)-5,6,7,8-tetrahydrofolyl-(gamma-L-Glu)(n) + L-glutamate + ATP = (6S)-5,6,7,8-tetrahydrofolyl-(gamma-L-Glu)(n+1) + ADP + phosphate + H(+). It functions in the pathway cofactor biosynthesis; tetrahydrofolylpolyglutamate biosynthesis. In terms of biological role, catalyzes conversion of folates to polyglutamate derivatives allowing concentration of folate compounds in the cell and the intracellular retention of these cofactors, which are important substrates for most of the folate-dependent enzymes that are involved in one-carbon transfer reactions involved in purine, pyrimidine and amino acid synthesis. Required for methionine synthesis and maintenance of intact mitochondrial DNA. Involved in telomere maintenance. This Saccharomyces cerevisiae (strain RM11-1a) (Baker's yeast) protein is Folylpolyglutamate synthase.